Here is a 236-residue protein sequence, read N- to C-terminus: 2-C-methyl-D-erythritol 4-phosphate cytidylyltransferase (236 aa).

This sequence belongs to the IspD/TarI cytidylyltransferase family. IspD subfamily. As to quaternary structure, homodimer.

The catalysed reaction is 2-C-methyl-D-erythritol 4-phosphate + CTP + H(+) = 4-CDP-2-C-methyl-D-erythritol + diphosphate. It participates in isoprenoid biosynthesis; isopentenyl diphosphate biosynthesis via DXP pathway; isopentenyl diphosphate from 1-deoxy-D-xylulose 5-phosphate: step 2/6. Catalyzes the formation of 4-diphosphocytidyl-2-C-methyl-D-erythritol from CTP and 2-C-methyl-D-erythritol 4-phosphate (MEP). In Salmonella paratyphi A (strain ATCC 9150 / SARB42), this protein is 2-C-methyl-D-erythritol 4-phosphate cytidylyltransferase.